Reading from the N-terminus, the 335-residue chain is Methylthioribose-1-phosphate isomerase (335 aa).

Substrate contacts are provided by residues 43-45 (RGA), Arg-86, and Gln-193. The Proton donor role is filled by Asp-234. 244-245 (NK) contributes to the substrate binding site.

The protein belongs to the eIF-2B alpha/beta/delta subunits family. MtnA subfamily.

It carries out the reaction 5-(methylsulfanyl)-alpha-D-ribose 1-phosphate = 5-(methylsulfanyl)-D-ribulose 1-phosphate. It participates in amino-acid biosynthesis; L-methionine biosynthesis via salvage pathway; L-methionine from S-methyl-5-thio-alpha-D-ribose 1-phosphate: step 1/6. Functionally, catalyzes the interconversion of methylthioribose-1-phosphate (MTR-1-P) into methylthioribulose-1-phosphate (MTRu-1-P). This chain is Methylthioribose-1-phosphate isomerase, found in Parabacteroides distasonis (strain ATCC 8503 / DSM 20701 / CIP 104284 / JCM 5825 / NCTC 11152).